Consider the following 274-residue polypeptide: MPELPEVETTKQGIKPHLEGRMITAVQVRNRKLRLPVPLNLNELCQGKHITAITRRGKYILLHMDKGYLLIHLGMSGHLRIVSQTANPQKHDHVDLHINNGLALRFCDPRRFGLFIYIDENPYQHPLLAHLGPEPLSDDFNSEYLLRKAANKSQSIKSFIMDSQIVVGIGNIYAAESLFLAKIHPNTSAKKITTEEFNSLTGHIKKILESAIEAGGTTLRDFYSSDGKPGYFRFALKVYGRKNLPCLVCENKIETVVIAGRHSAFCPHCQPIIT.

Residue P2 is the Schiff-base intermediate with DNA of the active site. Catalysis depends on E3, which acts as the Proton donor. K58 serves as the catalytic Proton donor; for beta-elimination activity. Residues H91, R110, and K152 each contribute to the DNA site. The FPG-type zinc-finger motif lies at 237–271 (KVYGRKNLPCLVCENKIETVVIAGRHSAFCPHCQP). The active-site Proton donor; for delta-elimination activity is R261.

It belongs to the FPG family. Monomer. The cofactor is Zn(2+).

It catalyses the reaction Hydrolysis of DNA containing ring-opened 7-methylguanine residues, releasing 2,6-diamino-4-hydroxy-5-(N-methyl)formamidopyrimidine.. The enzyme catalyses 2'-deoxyribonucleotide-(2'-deoxyribose 5'-phosphate)-2'-deoxyribonucleotide-DNA = a 3'-end 2'-deoxyribonucleotide-(2,3-dehydro-2,3-deoxyribose 5'-phosphate)-DNA + a 5'-end 5'-phospho-2'-deoxyribonucleoside-DNA + H(+). Functionally, involved in base excision repair of DNA damaged by oxidation or by mutagenic agents. Acts as a DNA glycosylase that recognizes and removes damaged bases. Has a preference for oxidized purines, such as 7,8-dihydro-8-oxoguanine (8-oxoG). Has AP (apurinic/apyrimidinic) lyase activity and introduces nicks in the DNA strand. Cleaves the DNA backbone by beta-delta elimination to generate a single-strand break at the site of the removed base with both 3'- and 5'-phosphates. This chain is Formamidopyrimidine-DNA glycosylase, found in Legionella pneumophila subsp. pneumophila (strain Philadelphia 1 / ATCC 33152 / DSM 7513).